A 331-amino-acid polypeptide reads, in one-letter code: Neuropeptides B/W receptor type 1 (331 aa).

The Extracellular portion of the chain corresponds to 1 to 43 (MHNASYWGPERANTSCPAPAPTLGCPNASGPAPPLPPPLAVAV). 3 N-linked (GlcNAc...) asparagine glycosylation sites follow: asparagine 3, asparagine 13, and asparagine 27. Residues 44–66 (PVVYAVICAVGLAGNSAVLFVLL) traverse the membrane as a helical segment. At 67-75 (RAPRRKTVT) the chain is on the cytoplasmic side. The helical transmembrane segment at 76-100 (NLFILNLAVADELFTLVPPVNIADF) threads the bilayer. Over 101-115 (LLRRWPFGELLCKLV) the chain is Extracellular. Cysteine 112 and cysteine 191 are oxidised to a cystine. A helical membrane pass occupies residues 116-135 (VAVDQYNTFSSLYFLTVMSA). The Cytoplasmic segment spans residues 136-160 (DRYLVVLATAESRRVAGRTYGAARA). A helical transmembrane segment spans residues 161 to 180 (VSLAVWGVATLVVLPFAVFA). The Extracellular portion of the chain corresponds to 181–205 (RLDEEQGRRQCVLVFPQPEALWWRA). The helical transmembrane segment at 206 to 227 (SRLYTLVLGFAIPVSTICVLYT) threads the bilayer. Residues 228–251 (SLLCRLRAIRLDSHAKALDRAKKR) are Cytoplasmic-facing. Residues 252–276 (VTVLVVAILAVCLLVWTPYHLSTVV) traverse the membrane as a helical segment. At 277-286 (ALTTDLPQTP) the chain is on the extracellular side. A helical transmembrane segment spans residues 287 to 301 (LVIAVSYFITSLSYA). The Cytoplasmic portion of the chain corresponds to 302–331 (NSCLNPFLYAFLDDSFRRSLRQLLACRTTS).

It belongs to the G-protein coupled receptor 1 family.

It is found in the cell membrane. In terms of biological role, interacts specifically with a number of opioid ligands. Receptor for neuropeptides B and W, which may be involved in neuroendocrine system regulation, food intake and the organization of other signals. This Bos taurus (Bovine) protein is Neuropeptides B/W receptor type 1 (NPBWR1).